The primary structure comprises 312 residues: F-box protein At1g11270 (312 aa).

Residues 29–80 (SVVKLLLPHDVVGLILERLPVESLLRFKCVSNQWKSTIESQCFQERQLIRRM) form the F-box domain.

This is F-box protein At1g11270 from Arabidopsis thaliana (Mouse-ear cress).